The primary structure comprises 378 residues: Actin-related protein 2/3 complex subunit 1A (378 aa).

WD repeat units follow at residues 8 to 47 (RFAE…HWER), 53 to 92 (KHDQ…WVPT), 97 to 138 (RLNR…WVSK), 143 to 182 (RHES…VDTK), 203 to 242 (LSYS…PLAQ), 257 to 295 (ISEK…KAAS), and 331 to 375 (VHDN…QELG).

The protein belongs to the WD repeat ARPC1 family. Component of the Arp2/3 complex composed of ARP2, ARP3, ARPC1/p41-ARC, ARPC2/p34-ARC, ARPC3/p21-ARC, ARPC4/p20-ARC and ARPC5/p16-ARC. In terms of tissue distribution, expressed at low levels in all tissues with a relatively highest expression in inflorescences.

The protein localises to the cytoplasm. It is found in the cytoskeleton. In terms of biological role, functions as a component of the Arp2/3 complex which is involved in regulation of actin polymerization and together with an activating nucleation-promoting factor (NPF) mediates the formation of branched actin networks. Arp2/3 complex plays a critical role in the control of cell morphogenesis via the modulation of cell polarity development. In Arabidopsis thaliana (Mouse-ear cress), this protein is Actin-related protein 2/3 complex subunit 1A (ARPC1A).